The following is an 84-amino-acid chain: RNA-binding protein Hfq (84 aa).

The Sm domain occupies 10-70 (DLFLNVLRRD…ISTIMPFRPV (61 aa)).

This sequence belongs to the Hfq family. As to quaternary structure, homohexamer.

Its function is as follows. RNA chaperone that binds small regulatory RNA (sRNAs) and mRNAs to facilitate mRNA translational regulation in response to envelope stress, environmental stress and changes in metabolite concentrations. Also binds with high specificity to tRNAs. This is RNA-binding protein Hfq from Moorella thermoacetica (strain ATCC 39073 / JCM 9320).